The following is a 102-amino-acid chain: NADH-quinone oxidoreductase subunit K (102 aa).

The next 3 helical transmembrane spans lie at 5–25 (LSHFLIVAAMLFTIGVAGIIL), 30–50 (IIVVLMSVELILLSVNINLVS), and 62–82 (VFSLFVLTVAAAEAAIGLAIL).

This sequence belongs to the complex I subunit 4L family. In terms of assembly, NDH-1 is composed of 14 different subunits. Subunits NuoA, H, J, K, L, M, N constitute the membrane sector of the complex.

It localises to the cell inner membrane. It carries out the reaction a quinone + NADH + 5 H(+)(in) = a quinol + NAD(+) + 4 H(+)(out). NDH-1 shuttles electrons from NADH, via FMN and iron-sulfur (Fe-S) centers, to quinones in the respiratory chain. The immediate electron acceptor for the enzyme in this species is believed to be ubiquinone. Couples the redox reaction to proton translocation (for every two electrons transferred, four hydrogen ions are translocated across the cytoplasmic membrane), and thus conserves the redox energy in a proton gradient. This Methylocella silvestris (strain DSM 15510 / CIP 108128 / LMG 27833 / NCIMB 13906 / BL2) protein is NADH-quinone oxidoreductase subunit K.